The chain runs to 926 residues: Isoleucine--tRNA ligase (926 aa).

Positions 1-21 are disordered; the sequence is MKMKETLQLGKTAFPMRGNLP. Positions 57–67 match the 'HIGH' region motif; the sequence is PYANGNIHLGH. Glutamate 552 provides a ligand contact to L-isoleucyl-5'-AMP. Positions 593 to 597 match the 'KMSKS' region motif; that stretch reads KMSKS. Lysine 596 serves as a coordination point for ATP. Residues cysteine 886, cysteine 889, cysteine 906, and cysteine 909 each coordinate Zn(2+).

This sequence belongs to the class-I aminoacyl-tRNA synthetase family. IleS type 1 subfamily. As to quaternary structure, monomer. The cofactor is Zn(2+).

The protein localises to the cytoplasm. The catalysed reaction is tRNA(Ile) + L-isoleucine + ATP = L-isoleucyl-tRNA(Ile) + AMP + diphosphate. Its function is as follows. Catalyzes the attachment of isoleucine to tRNA(Ile). As IleRS can inadvertently accommodate and process structurally similar amino acids such as valine, to avoid such errors it has two additional distinct tRNA(Ile)-dependent editing activities. One activity is designated as 'pretransfer' editing and involves the hydrolysis of activated Val-AMP. The other activity is designated 'posttransfer' editing and involves deacylation of mischarged Val-tRNA(Ile). The polypeptide is Isoleucine--tRNA ligase (Enterococcus faecalis (strain ATCC 700802 / V583)).